We begin with the raw amino-acid sequence, 236 residues long: Aquaporin Z (236 aa).

A run of 2 helical transmembrane segments spans residues 12–32 (FFGT…AAGV) and 37–57 (IGYA…AYAV). The short motif at 66-68 (NPA) is the NPA 1 element. A run of 3 helical transmembrane segments spans residues 92-112 (VVGA…VAGF), 136-156 (AALI…LGAT), and 163-183 (GFAP…SIPV). Positions 189-191 (NPA) match the NPA 2 motif. The chain crosses the membrane as a helical span at residues 197-217 (ALFVGGWALEQLWLFWLAPIA).

Belongs to the MIP/aquaporin (TC 1.A.8) family. As to quaternary structure, homotetramer.

It is found in the cell inner membrane. The catalysed reaction is H2O(in) = H2O(out). Its function is as follows. Channel that permits osmotically driven movement of water in both directions. It is involved in the osmoregulation and in the maintenance of cell turgor during volume expansion in rapidly growing cells. It mediates rapid entry or exit of water in response to abrupt changes in osmolarity. This Bordetella bronchiseptica (strain ATCC BAA-588 / NCTC 13252 / RB50) (Alcaligenes bronchisepticus) protein is Aquaporin Z.